The following is a 294-amino-acid chain: Flavin-dependent thymidylate synthase (294 aa).

Positions 27–250 (GFIRVIDYMG…PFTYEAFEEY (224 aa)) constitute a ThyX domain. FAD-binding positions include Thr-73, 96–98 (RHR), and Glu-104. Residues 93 to 96 (QWIR), 104 to 108 (EYSAR), and Arg-189 each bind dUMP. Positions 96–106 (RHRTASVNEYS) match the ThyX motif motif. FAD-binding positions include 205-207 (NLH) and His-211. Position 216 (Arg-216) interacts with dUMP. Arg-216 serves as the catalytic Involved in ionization of N3 of dUMP, leading to its activation.

Belongs to the thymidylate synthase ThyX family. In terms of assembly, homotetramer. It depends on FAD as a cofactor.

It catalyses the reaction dUMP + (6R)-5,10-methylene-5,6,7,8-tetrahydrofolate + NADPH + H(+) = dTMP + (6S)-5,6,7,8-tetrahydrofolate + NADP(+). Its pathway is pyrimidine metabolism; dTTP biosynthesis. Its function is as follows. Catalyzes the reductive methylation of 2'-deoxyuridine-5'-monophosphate (dUMP) to 2'-deoxythymidine-5'-monophosphate (dTMP) while utilizing 5,10-methylenetetrahydrofolate (mTHF) as the methyl donor, and NADPH and FADH(2) as the reductant. The chain is Flavin-dependent thymidylate synthase from Rickettsia typhi (strain ATCC VR-144 / Wilmington).